The chain runs to 238 residues: Ribonuclease PH (238 aa).

Phosphate-binding positions include Arg-86 and 124-126; that span reads GTR.

This sequence belongs to the RNase PH family. Homohexameric ring arranged as a trimer of dimers.

The catalysed reaction is tRNA(n+1) + phosphate = tRNA(n) + a ribonucleoside 5'-diphosphate. Functionally, phosphorolytic 3'-5' exoribonuclease that plays an important role in tRNA 3'-end maturation. Removes nucleotide residues following the 3'-CCA terminus of tRNAs; can also add nucleotides to the ends of RNA molecules by using nucleoside diphosphates as substrates, but this may not be physiologically important. Probably plays a role in initiation of 16S rRNA degradation (leading to ribosome degradation) during starvation. The sequence is that of Ribonuclease PH from Actinobacillus pleuropneumoniae serotype 5b (strain L20).